Reading from the N-terminus, the 382-residue chain is Alkanesulfonate monooxygenase (382 aa).

It belongs to the SsuD family.

The catalysed reaction is an alkanesulfonate + FMNH2 + O2 = an aldehyde + FMN + sulfite + H2O + 2 H(+). Its function is as follows. Catalyzes the desulfonation of aliphatic sulfonates. This Pseudomonas putida (strain GB-1) protein is Alkanesulfonate monooxygenase.